The primary structure comprises 484 residues: Catalase (484 aa).

Met53 is modified (methionine sulfone). Active-site residues include His54 and Asn127. Tyr337 contributes to the heme binding site.

Homotetramer. The cofactor is heme. Requires NADP(+) as cofactor.

Its subcellular location is the cytoplasm. The catalysed reaction is 2 H2O2 = O2 + 2 H2O. In terms of biological role, decomposes hydrogen peroxide into water and oxygen; serves to protect cells from the toxic effects of hydrogen peroxide. The sequence is that of Catalase (katA) from Proteus mirabilis.